Consider the following 61-residue polypeptide: Metallothionein-2 (61 aa).

Met-1 carries the post-translational modification N-acetylmethionine. Residues Met-1 to Cys-29 are beta. A divalent metal cation contacts are provided by Cys-5, Cys-7, Cys-13, Cys-15, Cys-19, Cys-21, Cys-24, Cys-26, Cys-29, Cys-33, Cys-34, Cys-36, Cys-37, Cys-41, Cys-44, Cys-48, Cys-50, and Cys-57. Residues Lys-30–Ala-61 are alpha. Ser-58 carries the post-translational modification Phosphoserine. Cys-59 and Cys-60 together coordinate a divalent metal cation.

The protein belongs to the metallothionein superfamily. Type 1 family. In terms of assembly, interacts with EOLA1.

Functionally, metallothioneins have a high content of cysteine residues that bind various heavy metals; these proteins are transcriptionally regulated by both heavy metals and glucocorticoids. This chain is Metallothionein-2 (MT2A), found in Ovis aries (Sheep).